The chain runs to 227 residues: Lipoprotein-releasing system ATP-binding protein LolD (227 aa).

One can recognise an ABC transporter domain in the interval 6-227 (LTSQKLYKSY…LHEGSLYARE (222 aa)). 42 to 49 (GPSGSGKS) is an ATP binding site.

It belongs to the ABC transporter superfamily. Lipoprotein translocase (TC 3.A.1.125) family. As to quaternary structure, the complex is composed of two ATP-binding proteins (LolD) and two transmembrane proteins (LolC and LolE).

The protein localises to the cell inner membrane. Functionally, part of the ABC transporter complex LolCDE involved in the translocation of mature outer membrane-directed lipoproteins, from the inner membrane to the periplasmic chaperone, LolA. Responsible for the formation of the LolA-lipoprotein complex in an ATP-dependent manner. This Legionella pneumophila (strain Paris) protein is Lipoprotein-releasing system ATP-binding protein LolD.